A 106-amino-acid chain; its full sequence is Large ribosomal subunit protein uL23 (106 aa).

Belongs to the universal ribosomal protein uL23 family. In terms of assembly, part of the 50S ribosomal subunit. Contacts protein L29, and trigger factor when it is bound to the ribosome.

Its function is as follows. One of the early assembly proteins it binds 23S rRNA. One of the proteins that surrounds the polypeptide exit tunnel on the outside of the ribosome. Forms the main docking site for trigger factor binding to the ribosome. The sequence is that of Large ribosomal subunit protein uL23 from Neisseria meningitidis serogroup A / serotype 4A (strain DSM 15465 / Z2491).